The sequence spans 416 residues: Phosphoglycerate kinase (416 aa).

Valine 22, aspartate 23, phenylalanine 24, asparagine 25, glutamine 37, arginine 38, serine 61, histidine 62, glycine 64, arginine 65, leucine 120, arginine 121, histidine 168, and arginine 169 together coordinate (2R)-3-phosphoglycerate. Glycine 212 contributes to the ADP binding site. Glycine 212 provides a ligand contact to CDP. Positions 213 and 214 each coordinate AMP. Alanine 213 provides a ligand contact to ATP. Residue alanine 213 participates in Mg(2+) binding. CDP is bound at residue aspartate 217. Residue aspartate 217 coordinates Mg(2+). Residue lysine 218 coordinates AMP. Lysine 218 is a binding site for ATP. ADP is bound at residue glycine 236. Glycine 236 contacts CDP. AMP contacts are provided by glycine 237 and glycine 311. The ATP site is built by glycine 237 and glycine 311. 2 residues coordinate CDP: glycine 336 and phenylalanine 341. Residue phenylalanine 341 coordinates ADP. Glutamate 342 contacts AMP. The ATP site is built by glutamate 342, aspartate 373, and threonine 374. Position 373 (aspartate 373) interacts with Mg(2+).

The protein belongs to the phosphoglycerate kinase family. Monomer. Mg(2+) serves as cofactor. As to expression, expressed in all cells of the worm (at protein level), higher expression in the cells associated with the tubercles (tegumental modifications), the muscle and along the tegument.

The enzyme catalyses (2R)-3-phosphoglycerate + ATP = (2R)-3-phospho-glyceroyl phosphate + ADP. The protein operates within carbohydrate degradation; glycolysis; pyruvate from D-glyceraldehyde 3-phosphate: step 2/5. Involved in the seventh step in glycolysis. Catalyzes the conversion of 1,3-bisphosphoglycerate ((2R)-3-phospho-glyceroyl phosphate) to 3-phosphoglycerate ((2R)-3-phosphoglycerate) and results in the formation of ATP. Associated with the tegument to provide the energy needed for the tegumental repair resulting from immune damage. This chain is Phosphoglycerate kinase (PGK), found in Schistosoma mansoni (Blood fluke).